Consider the following 134-residue polypeptide: Transcription antitermination protein NusB (134 aa).

Belongs to the NusB family.

Its function is as follows. Involved in transcription antitermination. Required for transcription of ribosomal RNA (rRNA) genes. Binds specifically to the boxA antiterminator sequence of the ribosomal RNA (rrn) operons. The chain is Transcription antitermination protein NusB from Shewanella amazonensis (strain ATCC BAA-1098 / SB2B).